The following is a 467-amino-acid chain: Mothers against decapentaplegic homolog 2 (467 aa).

S2 is subject to N-acetylserine. T8 carries the post-translational modification Phosphothreonine. In terms of domain architecture, MH1 spans 10–176; it reads PVVKRLLGWK…YQRVETPVLP (167 aa). K19 carries the post-translational modification N6-acetyllysine. C74, C149, C161, and H166 together coordinate Zn(2+). Residues 207-217 show a composition bias toward polar residues; that stretch reads PAGIEPQSNYI. Residues 207–251 are disordered; the sequence is PAGIEPQSNYIPETPPPGYISEDGETSDQQLNQSMDTGSPAELSP. Position 220 is a phosphothreonine (T220). Positions 221 to 225 match the PY-motif motif; it reads PPPGY. A compositionally biased stretch (polar residues) spans 233-243; it reads SDQQLNQSMDT. A Phosphoserine; by CAMK2 modification is found at S240. Phosphoserine occurs at positions 245, 250, 255, 458, 460, and 464. In terms of domain architecture, MH2 spans 274-467; that stretch reads WCSIAYYELN…SPSVRCSSMS (194 aa). Residues S465 and S467 each carry the phosphoserine; by TGFBR1 modification.

It belongs to the dwarfin/SMAD family. Monomer; in the absence of TGF-beta. Heterodimer; in the presence of TGF-beta. Forms a heterodimer with co-SMAD, SMAD4, in the nucleus to form the transactivation complex SMAD2/SMAD4. Found in a complex with SMAD3 and TRIM33 upon addition of TGF-beta. Identified in a complex that contains at least ZNF451, SMAD2, SMAD3 and SMAD4. Interacts (via the MH2 domain) with ZFYVE9; may form trimers with the SMAD4 co-SMAD. Interacts with TAZ/WWRT1. Interacts with FOXH1. Interacts with SNW1. Interacts with CREB-binding protein (CBP) and EP300. Interacts with SNON. Interacts with ALK4/ACVR1B. Interacts with SKOR1. Interacts with SKOR2. Interacts with PRDM16. Interacts (via MH2 domain) with LEMD3. Interacts with RBPMS. Interacts with WWP1. Interacts (dephosphorylated form, via the MH1 and MH2 domains) with RANBP3 (via its C-terminal R domain); the interaction results in the export of dephosphorylated SMAD3 out of the nucleus and termination of the TGF-beta signaling. Interacts with PDPK1 (via PH domain). Interacts with DAB2; the interactions are enhanced upon TGF-beta stimulation. Interacts with USP15. Interacts with PPP5C. Interacts with LDLRAD4 (via the SMAD interaction motif). Interacts (via MH2 domain) with PMEPA1 (via the SMAD interaction motif). Interacts with ZFHX3. Interacts with ZNF451. Interacts with SMURF2 when phosphorylated on Ser-465/467. Interacts with PPM1A. Interacts with TGF-beta. Interacts with TGFBR1. Interacts with TGIF. Interacts with SMAD3 and TRIM33. Interacts with ZNF580. Interacts with NEDD4L in response to TGF-beta. Interacts with HGS. Interacts with AIP1. Interacts with WWP1. Interacts with PML. Interacts weakly with ZNF8. Interacts (when phosphorylated) with RNF111; RNF111 acts as an enhancer of the transcriptional responses by mediating ubiquitination and degradation of SMAD2 inhibitors. Interacts with YAP1 (when phosphorylated at 'Ser-55'). Interacts when phosphorylated with IPO7; the interaction facilitates translocation of SMAD2 to the nucleus. Interacts with MTMR4; negatively regulates TGF-beta signaling through SMAD2 dephosphorylation and retention in endosomes. Post-translationally, in response to TGF-beta, phosphorylated on the C-terminal SXS motif by TGF-beta and activin type 1 receptor kinases, phosphorylation declines progressively in a KMT5A-dependent manner. Phosphorylation in this motif is required for interaction with a number of proteins including SMURF2, SNON and SMAD4 in response to TGF-beta. Dephosphorylated in this motif by PPM1A leading to disruption of the SMAD2/3-SMAD4 complex, nuclear export and termination of the TGF-beta signaling. In response to decorin, the naturally occurring inhibitor of TGF-beta signaling, phosphorylated on Ser-240 by CaMK2. Phosphorylated by MAPK3 upon EGF stimulation; which increases transcriptional activity and stability, and is blocked by calmodulin. Phosphorylated by PDPK1. In terms of processing, acetylated on Lys-19 by coactivators in response to TGF-beta signaling, which increases transcriptional activity. In response to TGF-beta, ubiquitinated by NEDD4L; which promotes its degradation. Monoubiquitinated, leading to prevent DNA-binding. Deubiquitination by USP15 alleviates inhibition and promotes activation of TGF-beta target genes. Ubiquitinated by RNF111, leading to its degradation: only SMAD2 proteins that are 'in use' are targeted by RNF111, RNF111 playing a key role in activating SMAD2 and regulating its turnover.

The protein resides in the cytoplasm. It localises to the nucleus. Functionally, receptor-regulated SMAD (R-SMAD) that is an intracellular signal transducer and transcriptional modulator activated by TGF-beta (transforming growth factor) and activin type 1 receptor kinases. Binds the TRE element in the promoter region of many genes that are regulated by TGF-beta and, on formation of the SMAD2/SMAD4 complex, activates transcription. Promotes TGFB1-mediated transcription of odontoblastic differentiation genes in dental papilla cells. Positively regulates PDPK1 kinase activity by stimulating its dissociation from the 14-3-3 protein YWHAQ which acts as a negative regulator. The chain is Mothers against decapentaplegic homolog 2 (SMAD2) from Pongo abelii (Sumatran orangutan).